Consider the following 244-residue polypeptide: tRNA (guanine-N(7)-)-methyltransferase (244 aa).

Residues Glu75, Glu100, Asp127, and Asp150 each contribute to the S-adenosyl-L-methionine site. Residue Asp150 is part of the active site. Residues Lys154, Asp186, and 223–226 (TRFE) each bind substrate.

This sequence belongs to the class I-like SAM-binding methyltransferase superfamily. TrmB family.

The catalysed reaction is guanosine(46) in tRNA + S-adenosyl-L-methionine = N(7)-methylguanosine(46) in tRNA + S-adenosyl-L-homocysteine. It participates in tRNA modification; N(7)-methylguanine-tRNA biosynthesis. Functionally, catalyzes the formation of N(7)-methylguanine at position 46 (m7G46) in tRNA. The protein is tRNA (guanine-N(7)-)-methyltransferase of Xylella fastidiosa (strain M23).